We begin with the raw amino-acid sequence, 162 residues long: uncharacterized protein (162 aa).

It is found in the cytoplasm. Its subcellular location is the nucleus. This is an uncharacterized protein from Schizosaccharomyces pombe (strain 972 / ATCC 24843) (Fission yeast).